Here is a 471-residue protein sequence, read N- to C-terminus: Coagulation factor IX (471 aa).

The N-terminal stretch at 1–19 (MAKIPLILSFCLLEAFLGA) is a signal peptide. Positions 20 to 39 (ESTVFIENKEASTVLSRTRR) are excised as a propeptide. The Gla domain occupies 40–85 (GNSNRLEELIPGNLERECIEEKCSFEEAREVFENTEKTMEFWKIYI). Residues Asn-41, Glu-46, Glu-47, Glu-54, Glu-56, Glu-59, Glu-60, Glu-65, Glu-66, and Glu-69 each contribute to the Ca(2+) site. Residues Glu-46, Glu-47, Glu-54, Glu-56, Glu-59, Glu-60, Glu-65, Glu-66, Glu-69, Glu-72, Glu-75, and Glu-79 each carry the 4-carboxyglutamate modification. Residue Glu-54 coordinates Mg(2+). The cysteines at positions 57 and 62 are disulfide-linked. Glu-59 provides a ligand contact to Mg(2+). Glu-65 lines the Mg(2+) pocket. Glu-69 lines the Mg(2+) pocket. Residues Glu-75, Glu-79, Asp-86, Gly-87, and Gln-89 each contribute to the Ca(2+) site. Positions 75 and 79 each coordinate Mg(2+). The EGF-like 1; calcium-binding domain maps to 86–122 (DGDQCNSNPCKNGAVCKDGVSSYECMCPPGYGGRNCE). 10 disulfides stabilise this stretch: Cys-90–Cys-101, Cys-95–Cys-110, Cys-112–Cys-121, Cys-127–Cys-138, Cys-134–Cys-148, Cys-150–Cys-163, Cys-171–Cys-345, Cys-262–Cys-278, Cys-392–Cys-406, and Cys-417–Cys-445. An O-linked (Glc...) serine glycan is attached at Ser-92. Asp-103 contacts Ca(2+). Asp-103 is subject to (3R)-3-hydroxyaspartate. A Phosphoserine modification is found at Ser-107. The 42-residue stretch at 123–164 (IDSTCATKNGGCEHFCRHDTPQKAVCSCASGYKLHEDGKSCK) folds into the EGF-like 2 domain. The propeptide at 186–235 (TENTIERWNITAHDEGDAHDEALDITEPPPPPTTSAAPAKIVPITKNDTR) is activation peptide. The Peptidase S1 domain maps to 236-469 (VVGGYDSVKG…YVKWIRETTR (234 aa)). The active-site Charge relay system is the His-277. Residues Glu-291, Asn-293, Glu-296, and Glu-301 each contribute to the Ca(2+) site. Catalysis depends on Asp-325, which acts as the Charge relay system. Ser-421 functions as the Charge relay system in the catalytic mechanism.

This sequence belongs to the peptidase S1 family. Heterodimer of a light chain and a heavy chain; disulfide-linked. In terms of processing, activated by factor XIa, which excises the activation peptide. The propeptide can also be removed by snake venom protease. Activated by coagulation factor VIIa-tissue factor (F7-F3) complex in calcium-dependent manner. The iron and 2-oxoglutarate dependent 3-hydroxylation of aspartate and asparagine is (R) stereospecific within EGF domains.

The protein resides in the secreted. The catalysed reaction is Selective cleavage of Arg-|-Ile bond in factor X to form factor Xa.. Factor IX is a vitamin K-dependent plasma protein that participates in the intrinsic pathway of blood coagulation by converting factor X to its active form in the presence of Ca(2+) ions, phospholipids, and factor VIIIa. This chain is Coagulation factor IX (F9), found in Gallus gallus (Chicken).